The sequence spans 493 residues: Putative BTB/POZ domain-containing protein L35 (493 aa).

Residues 16–87 form the BTB domain; the sequence is TDLKLTLVDD…YLVDNKSEVD (72 aa).

It belongs to the mimivirus BTB/WD family.

The polypeptide is Putative BTB/POZ domain-containing protein L35 (Acanthamoeba polyphaga (Amoeba)).